A 322-amino-acid chain; its full sequence is Tyrosine recombinase XerC (322 aa).

Positions 1-25 (MPEAAPPVADARGSSPTATTGPGAD) are disordered. Over residues 16-25 (PTATTGPGAD) the composition is skewed to low complexity. Residues 25-111 (DATLSAVEPF…ACRSYYAWLL (87 aa)) enclose the Core-binding (CB) domain. Positions 132 to 309 (KLPQVLDADE…DFQHLAKVYD (178 aa)) constitute a Tyr recombinase domain. Residues Arg-171, Lys-195, His-261, Arg-264, and His-287 contribute to the active site. Tyr-296 functions as the O-(3'-phospho-DNA)-tyrosine intermediate in the catalytic mechanism.

It belongs to the 'phage' integrase family. XerC subfamily. In terms of assembly, forms a cyclic heterotetrameric complex composed of two molecules of XerC and two molecules of XerD.

Its subcellular location is the cytoplasm. Site-specific tyrosine recombinase, which acts by catalyzing the cutting and rejoining of the recombining DNA molecules. The XerC-XerD complex is essential to convert dimers of the bacterial chromosome into monomers to permit their segregation at cell division. It also contributes to the segregational stability of plasmids. This chain is Tyrosine recombinase XerC, found in Xanthomonas campestris pv. campestris (strain 8004).